We begin with the raw amino-acid sequence, 364 residues long: FMNH(2)-dependent dimethylsulfone monooxygenase (364 aa).

This sequence belongs to the SsuD family.

It carries out the reaction dimethyl sulfone + FMNH2 + O2 = methanesulfinate + FMN + formaldehyde + H2O + 2 H(+). In terms of biological role, involved in the dimethyl sulfide degradation pathway. Catalyzes the oxidation of dimethylsulfone (DMSO2) to yield methanesulfinate, which is oxidized spontaneously to methanesulfonate in the presence of dioxygen and FMNH(2). The chain is FMNH(2)-dependent dimethylsulfone monooxygenase from Pseudomonas fluorescens (strain Pf0-1).